Consider the following 265-residue polypeptide: Triosephosphate isomerase (265 aa).

13–15 serves as a coordination point for substrate; that stretch reads NWK. H106 (electrophile) is an active-site residue. E179 acts as the Proton acceptor in catalysis. Residues G185, S223, and 244-245 each bind substrate; that span reads GG.

The protein belongs to the triosephosphate isomerase family. Homodimer.

The protein localises to the cytoplasm. It catalyses the reaction D-glyceraldehyde 3-phosphate = dihydroxyacetone phosphate. It participates in carbohydrate biosynthesis; gluconeogenesis. Its pathway is carbohydrate degradation; glycolysis; D-glyceraldehyde 3-phosphate from glycerone phosphate: step 1/1. In terms of biological role, involved in the gluconeogenesis. Catalyzes stereospecifically the conversion of dihydroxyacetone phosphate (DHAP) to D-glyceraldehyde-3-phosphate (G3P). This chain is Triosephosphate isomerase, found in Acinetobacter baylyi (strain ATCC 33305 / BD413 / ADP1).